Reading from the N-terminus, the 214-residue chain is Phosphatidyl-N-methylethanolamine N-methyltransferase (214 aa).

Residues 1-19 are Lumenal-facing; sequence MPLVALGVADLFNFVDYSK. Residues 20–40 constitute an intramembrane region (helical); sequence TSLAISAAAIAFNPTFWNIVA. The Lumenal segment spans residues 41-52; sequence RREYRTKFLTRA. A helical membrane pass occupies residues 53–74; the sequence is FGGNAQVACYFLAVTIFGLGLV. Topologically, residues 75–101 are cytoplasmic; sequence RDFLYERALRDQPSHPLLEGTYVKYAA. The chain crosses the membrane as a helical span at residues 102 to 122; sequence YALLALGNLLVITSTMRLGIT. 106–108 is an S-adenosyl-L-methionine binding site; sequence ALG. Residues 123-165 lie on the Lumenal side of the membrane; the sequence is GTFLGDYFGILMDGIVTGFPFNVTSAPMYYGSTMSFLGTALLY. The helical transmembrane segment at 166-186 threads the bilayer; the sequence is GKPAGLLLTAWVLFVYIIAIQ. Topologically, residues 187 to 214 are cytoplasmic; the sequence is FENPFTAEIYAKRDRERAKAAGTSKKEL. 188–189 contributes to the S-adenosyl-L-methionine binding site; sequence EN.

The protein belongs to the class VI-like SAM-binding methyltransferase superfamily. PEMT/PEM2 methyltransferase family.

Its subcellular location is the endoplasmic reticulum membrane. The protein localises to the mitochondrion membrane. The enzyme catalyses a 1,2-diacyl-sn-glycero-3-phospho-N-methylethanolamine + S-adenosyl-L-methionine = a 1,2-diacyl-sn-glycero-3-phospho-N,N-dimethylethanolamine + S-adenosyl-L-homocysteine + H(+). The catalysed reaction is a 1,2-diacyl-sn-glycero-3-phospho-N,N-dimethylethanolamine + S-adenosyl-L-methionine = a 1,2-diacyl-sn-glycero-3-phosphocholine + S-adenosyl-L-homocysteine + H(+). It participates in phospholipid metabolism; phosphatidylcholine biosynthesis. Catalyzes the second two steps of the methylation pathway of phosphatidylcholine biosynthesis, the SAM-dependent methylation of phosphatidylmonomethylethanolamine (PMME) to phosphatidyldimethylethanolamine (PDME) and of PDME to phosphatidylcholine (PC). This Neurospora crassa (strain ATCC 24698 / 74-OR23-1A / CBS 708.71 / DSM 1257 / FGSC 987) protein is Phosphatidyl-N-methylethanolamine N-methyltransferase.